The sequence spans 174 residues: Co-chaperone protein HscB (174 aa).

The J domain occupies 2 to 74 (NYFTLFDLPR…LNRAIYFLCL (73 aa)).

It belongs to the HscB family. In terms of assembly, interacts with HscA and stimulates its ATPase activity. Interacts with IscU.

Functionally, co-chaperone involved in the maturation of iron-sulfur cluster-containing proteins. Seems to help targeting proteins to be folded toward HscA. The chain is Co-chaperone protein HscB from Buchnera aphidicola subsp. Acyrthosiphon pisum (strain Tuc7).